The following is a 322-amino-acid chain: Aldo-keto reductase family 1 member C13 (322 aa).

Residues 20-24 and aspartate 50 contribute to the NAD(+) site; that span reads GFGTY. Tyrosine 55 acts as the Proton donor in catalysis. Histidine 117 is a binding site for substrate. Residues 166–167, glutamine 190, 216–224, and 270–280 each bind NAD(+); these read SN, FGALGTQRY, and QSFYESEMKEN.

Belongs to the aldo/keto reductase family. In terms of assembly, monomer. Post-translationally, the N-terminus is blocked.

It carries out the reaction morphine + NAD(+) = morphinone + NADH + H(+). It catalyses the reaction morphine + NADP(+) = morphinone + NADPH + H(+). With respect to regulation, strongly inhibited by sulfhydryl reagents and ketamine, but not by pyrazole, barbital and indomethacine. Catalyzes the dehydrogenation of morphine to morphinone. The enzyme also exhibits significant activity for a variety of cyclic and alicyclic alcohols. In addition to xenobiotics, the enzyme catalyzes the dehydrogenation of 17-beta-hydroxysteroids with much higher affinities than morphine. Uses both NAD and NADP, but the activity is much greater with NAD than with NADP. This Mesocricetus auratus (Golden hamster) protein is Aldo-keto reductase family 1 member C13 (AKR1C13).